The following is a 247-amino-acid chain: Cell division protein ZapD (247 aa).

The protein belongs to the ZapD family. As to quaternary structure, interacts with FtsZ.

The protein resides in the cytoplasm. In terms of biological role, cell division factor that enhances FtsZ-ring assembly. Directly interacts with FtsZ and promotes bundling of FtsZ protofilaments, with a reduction in FtsZ GTPase activity. This is Cell division protein ZapD from Klebsiella pneumoniae (strain 342).